The primary structure comprises 157 residues: Ribosome-binding factor A (157 aa).

Positions 127–157 are disordered; the sequence is QQQFGSEEASVEDEVLGDDVADDADETEGKD. Positions 135–157 are enriched in acidic residues; it reads ASVEDEVLGDDVADDADETEGKD.

Belongs to the RbfA family. In terms of assembly, monomer. Binds 30S ribosomal subunits, but not 50S ribosomal subunits or 70S ribosomes.

It localises to the cytoplasm. Functionally, one of several proteins that assist in the late maturation steps of the functional core of the 30S ribosomal subunit. Associates with free 30S ribosomal subunits (but not with 30S subunits that are part of 70S ribosomes or polysomes). Required for efficient processing of 16S rRNA. May interact with the 5'-terminal helix region of 16S rRNA. The chain is Ribosome-binding factor A from Shewanella baltica (strain OS195).